The primary structure comprises 366 residues: Chorismate synthase (366 aa).

R47 provides a ligand contact to NADP(+). FMN is bound by residues 124 to 126 (RSS), G286, 301 to 305 (KPVAT), and R327.

It belongs to the chorismate synthase family. As to quaternary structure, homotetramer. Requires FMNH2 as cofactor.

It carries out the reaction 5-O-(1-carboxyvinyl)-3-phosphoshikimate = chorismate + phosphate. It participates in metabolic intermediate biosynthesis; chorismate biosynthesis; chorismate from D-erythrose 4-phosphate and phosphoenolpyruvate: step 7/7. Functionally, catalyzes the anti-1,4-elimination of the C-3 phosphate and the C-6 proR hydrogen from 5-enolpyruvylshikimate-3-phosphate (EPSP) to yield chorismate, which is the branch point compound that serves as the starting substrate for the three terminal pathways of aromatic amino acid biosynthesis. This reaction introduces a second double bond into the aromatic ring system. This chain is Chorismate synthase, found in Methylacidiphilum infernorum (isolate V4) (Methylokorus infernorum (strain V4)).